The sequence spans 60 residues: Large ribosomal subunit protein bL32 (60 aa).

The tract at residues 1–60 is disordered; that stretch reads MAVQQNKKSRSARDMRRSHDALEPNALSVEKSTGEVHLRHHVSPDGFYRGRKVIDKGADE. Residues 11 to 22 show a composition bias toward basic and acidic residues; sequence SARDMRRSHDAL.

Belongs to the bacterial ribosomal protein bL32 family.

The chain is Large ribosomal subunit protein bL32 from Stutzerimonas stutzeri (strain A1501) (Pseudomonas stutzeri).